A 125-amino-acid polypeptide reads, in one-letter code: Holo-[acyl-carrier-protein] synthase (125 aa).

D8 and E60 together coordinate Mg(2+).

This sequence belongs to the P-Pant transferase superfamily. AcpS family. Mg(2+) serves as cofactor.

Its subcellular location is the cytoplasm. The catalysed reaction is apo-[ACP] + CoA = holo-[ACP] + adenosine 3',5'-bisphosphate + H(+). In terms of biological role, transfers the 4'-phosphopantetheine moiety from coenzyme A to a Ser of acyl-carrier-protein. The chain is Holo-[acyl-carrier-protein] synthase from Wolbachia sp. subsp. Brugia malayi (strain TRS).